A 177-amino-acid chain; its full sequence is Myosin regulatory light chain 2 (177 aa).

Residues methionine 1–lysine 16 show a composition bias toward basic residues. Residues methionine 1 to phenylalanine 24 are disordered. IgE-binding epitope regions lie at residues arginine 13–arginine 30, asparagine 22–glycine 48, valine 49–alanine 66, threonine 58–methionine 90, proline 79–serine 99, and asparagine 118–aspartate 141. The region spanning arginine 30–isoleucine 65 is the EF-hand 1 domain. Positions 43, 45, 47, and 54 each coordinate Ca(2+). The 36-residue stretch at phenylalanine 135–aspartate 170 folds into the EF-hand 2 domain.

In terms of assembly, myosin is a hexamer of 2 heavy chains and 4 light chains. In terms of tissue distribution, expressed in tail muscle (at protein level).

This Penaeus vannamei (Whiteleg shrimp) protein is Myosin regulatory light chain 2.